A 414-amino-acid chain; its full sequence is Tyrosine--tRNA ligase (414 aa).

Residue Y38 participates in L-tyrosine binding. A 'HIGH' region motif is present at residues 43 to 52 (PTAISLHLGN). Positions 165 and 169 each coordinate L-tyrosine. Positions 227–231 (KIGKS) match the 'KMSKS' region motif. K230 provides a ligand contact to ATP. The region spanning 349-413 (DDLFLTLVDS…KGKKQYWVIY (65 aa)) is the S4 RNA-binding domain.

It belongs to the class-I aminoacyl-tRNA synthetase family. TyrS type 1 subfamily. As to quaternary structure, homodimer.

It is found in the cytoplasm. The catalysed reaction is tRNA(Tyr) + L-tyrosine + ATP = L-tyrosyl-tRNA(Tyr) + AMP + diphosphate + H(+). Functionally, catalyzes the attachment of tyrosine to tRNA(Tyr) in a two-step reaction: tyrosine is first activated by ATP to form Tyr-AMP and then transferred to the acceptor end of tRNA(Tyr). The polypeptide is Tyrosine--tRNA ligase (Mycoplasmopsis pulmonis (strain UAB CTIP) (Mycoplasma pulmonis)).